The primary structure comprises 514 residues: MEELQGYLEKDRSRQQHFLYPLLFKEYIYTFVHDRGLNSSVFYESTEIFGYDNKSSSVLVKRSIIRMYQQNYLIYSVNDSNQNRFVGHNNYFYFHFYSQMILEGFAVIVEIPFLLRLVSSLEEKKIPKSQNLNLRSIHSTFPFLEDKLSHLNYVSDILIPYPIHLKILVQILQFWIQDVPSLHLLRFFLHEYHNWNSLITPNNSIFLFSKENKRVFRFPYNSYVSECEFVLVFLRKQSSYLRVTSSGAFLERTHFYGKIEHRIVVRRNYFQKTLWFFKDPFMHYVRYQGKAILVSKGTHLLMKKWKCYLVNFWQYYFHFWSQPYRIHINQLSNCSFYFLGYLSSVLINPSAVRNQMLENSFLIDTVIKKFDTRVPVITLIGSLSKAKFCTVLGHPISKPIWTDLSDCDINDRFGRICRNLSHYHSGSSKKQSLYRIKYILRFSCAXTLARKHKSTVRAFLQRLGSGLLEEFFMKEEQVVSLIFPKTTSFSLHESHIERIWYLDIIHINDLVNYS.

The protein belongs to the intron maturase 2 family. MatK subfamily.

It localises to the plastid. The protein localises to the chloroplast. Usually encoded in the trnK tRNA gene intron. Probably assists in splicing its own and other chloroplast group II introns. The polypeptide is Maturase K (Phoenix dactylifera (Date palm)).